We begin with the raw amino-acid sequence, 243 residues long: Probable transcriptional regulatory protein Smlt3713 (243 aa).

The protein belongs to the TACO1 family.

It is found in the cytoplasm. This chain is Probable transcriptional regulatory protein Smlt3713, found in Stenotrophomonas maltophilia (strain K279a).